Reading from the N-terminus, the 294-residue chain is Foldase protein PrsA 1 (294 aa).

The N-terminal stretch at 1–21 (MTKLKKVMISVIAATLLLLAG) is a signal peptide. C22 is lipidated: N-palmitoyl cysteine. C22 is lipidated: S-diacylglycerol cysteine. Residues 135–226 (EPDITVRHIL…YGYHLIQLVK (92 aa)) form the PpiC domain.

Belongs to the PrsA family.

It localises to the cell membrane. It carries out the reaction [protein]-peptidylproline (omega=180) = [protein]-peptidylproline (omega=0). Its function is as follows. Plays a major role in protein secretion by helping the post-translocational extracellular folding of several secreted proteins. The polypeptide is Foldase protein PrsA 1 (prsA1) (Listeria monocytogenes serovar 1/2a (strain ATCC BAA-679 / EGD-e)).